A 400-amino-acid chain; its full sequence is 1-deoxy-D-xylulose 5-phosphate reductoisomerase (400 aa).

7 residues coordinate NADPH: Thr-10, Gly-11, Ser-12, Ile-13, Gly-36, Asn-38, and Asn-124. Lys-125 serves as a coordination point for 1-deoxy-D-xylulose 5-phosphate. Glu-126 is a binding site for NADPH. Asp-150 contributes to the Mn(2+) binding site. Residues Ser-151, Glu-152, Ser-186, and His-209 each coordinate 1-deoxy-D-xylulose 5-phosphate. Glu-152 serves as a coordination point for Mn(2+). NADPH is bound at residue Gly-215. 1-deoxy-D-xylulose 5-phosphate is bound by residues Ser-222, Asn-227, Lys-228, and Glu-231. Glu-231 contacts Mn(2+).

It belongs to the DXR family. It depends on Mg(2+) as a cofactor. Mn(2+) serves as cofactor.

The catalysed reaction is 2-C-methyl-D-erythritol 4-phosphate + NADP(+) = 1-deoxy-D-xylulose 5-phosphate + NADPH + H(+). Its pathway is isoprenoid biosynthesis; isopentenyl diphosphate biosynthesis via DXP pathway; isopentenyl diphosphate from 1-deoxy-D-xylulose 5-phosphate: step 1/6. Catalyzes the NADPH-dependent rearrangement and reduction of 1-deoxy-D-xylulose-5-phosphate (DXP) to 2-C-methyl-D-erythritol 4-phosphate (MEP). The sequence is that of 1-deoxy-D-xylulose 5-phosphate reductoisomerase from Aliivibrio fischeri (strain MJ11) (Vibrio fischeri).